The following is a 554-amino-acid chain: Probable urocanate hydratase (554 aa).

NAD(+) contacts are provided by residues 49–50 (GG), Gln127, Glu194, 240–241 (NA), 261–265 (QTAAH), 271–272 (YI), and Tyr320. The active site involves Cys408. Gly490 serves as a coordination point for NAD(+).

It belongs to the urocanase family. NAD(+) serves as cofactor.

The protein resides in the cytoplasm. The enzyme catalyses 4-imidazolone-5-propanoate = trans-urocanate + H2O. It participates in amino-acid degradation; L-histidine degradation into L-glutamate; N-formimidoyl-L-glutamate from L-histidine: step 2/3. Functionally, catalyzes the conversion of urocanate to 4-imidazolone-5-propionate. In Thermoplasma acidophilum (strain ATCC 25905 / DSM 1728 / JCM 9062 / NBRC 15155 / AMRC-C165), this protein is Probable urocanate hydratase.